The sequence spans 700 residues: Methionine--tRNA ligase (700 aa).

Positions 16–26 (PYANGAFHVGH) match the 'HIGH' region motif. Positions 148, 151, 161, and 164 each coordinate Zn(2+). Positions 337-341 (KMSKS) match the 'KMSKS' region motif. Lysine 340 serves as a coordination point for ATP. The 107-residue stretch at 594–700 (DFAKIDLRIA…PGAEPGMRVG (107 aa)) folds into the tRNA-binding domain.

The protein belongs to the class-I aminoacyl-tRNA synthetase family. MetG type 1 subfamily. As to quaternary structure, homodimer. It depends on Zn(2+) as a cofactor.

Its subcellular location is the cytoplasm. It carries out the reaction tRNA(Met) + L-methionine + ATP = L-methionyl-tRNA(Met) + AMP + diphosphate. Functionally, is required not only for elongation of protein synthesis but also for the initiation of all mRNA translation through initiator tRNA(fMet) aminoacylation. In Janthinobacterium sp. (strain Marseille) (Minibacterium massiliensis), this protein is Methionine--tRNA ligase.